The sequence spans 262 residues: Phosphatidylglycerol--prolipoprotein diacylglyceryl transferase (262 aa).

The next 4 helical transmembrane spans lie at 9-29, 41-61, 80-100, and 109-129; these read LGPL…ILAV, IIPD…ILGA, IFAI…GALV, and LINT…AQSL. Residue Arg-131 participates in a 1,2-diacyl-sn-glycero-3-phospho-(1'-sn-glycerol) binding. Transmembrane regions (helical) follow at residues 167 to 187, 197 to 217, and 226 to 246; these read QPTF…ILIF, GHIT…IEGM, and GLRV…MIVI.

It belongs to the Lgt family.

It is found in the cell membrane. The enzyme catalyses L-cysteinyl-[prolipoprotein] + a 1,2-diacyl-sn-glycero-3-phospho-(1'-sn-glycerol) = an S-1,2-diacyl-sn-glyceryl-L-cysteinyl-[prolipoprotein] + sn-glycerol 1-phosphate + H(+). Its pathway is protein modification; lipoprotein biosynthesis (diacylglyceryl transfer). Catalyzes the transfer of the diacylglyceryl group from phosphatidylglycerol to the sulfhydryl group of the N-terminal cysteine of a prolipoprotein, the first step in the formation of mature lipoproteins. The chain is Phosphatidylglycerol--prolipoprotein diacylglyceryl transferase from Streptococcus pneumoniae (strain Taiwan19F-14).